A 60-amino-acid chain; its full sequence is MNYFSVIMYLINSVIFTFMIFLTFVNPSLLNDQYWVYILIGFFTAIVFHSGYQAGKGSEK.

The next 2 membrane-spanning stretches (helical) occupy residues 4–24 and 35–55; these read FSVI…FLTF and WVYI…YQAG.

It localises to the host membrane. The chain is Putative transmembrane protein 74 (SIFV0074) from Sulfolobus islandicus filamentous virus (isolate Iceland/Hveragerdi) (SIFV).